We begin with the raw amino-acid sequence, 1033 residues long: MTARMISIYGLVLASMMASVLASSSRFQRLPQSQSVVENESVKFECESTDSYSELHYDWLHNGHRIAYDKRVHQIGSNLHIEAVRRTEDVGSYVCIATNLASGAREASPPAKLSVIYIESASVQLLGSNRNELLLKCHVEGASGDSEPLEIEWYRNSEKLSTWRNVQLDQHRLIVRQPGSDDDGLYRCTASNAAGRVMSKQGYVYQSSVKCLPRLARRKSQKVMESWDKQTFLCRGKRGGAAGLEALPAAPEDLRIVQGPIAQSIIKEGEPTALTCLYELPDELKNQRIQLRWRKDGKLLRQVELGGSAPISGHSFDSGKDALLREDARLVLHKQNGTLSFASIIASDAGQYQCQLQLEAHVPVSSSPGVLEVIEQLKFVPQPTSKNLELDAVVAKVHCKAQGTPTPQVQWVREGENNTLPDQVEVDANGTLIFRNVNSEHRGNYTCLATNTQGQINATVAINVVVTPKFSVPPVGPIETAELGTVVIHCQAIGDPKPTIQWDKDLKYLSENNTDRERFRFLENGTLEIRNVQVEDEGSYGCTIGNSAGLKREDVQLIVKTTGDGFAPEESGGDGFLVTRAVLITMTVALAYIVLVVGLMLWCRYRRQARKARLNDLSTKEAGGDQPDATGNGKGSEQEPCLSKQHNGHSKSRSKSSGDAQKSDDTACSQQSRASKKSAHIYEQLALPRSGLSELIQIGRGEFGDVFVGKLKATLVTSPSDKDADTEKQHSNSENGSGGSGSGSTTLSTLNEKRRSKTSMDDIEEIKEEEQEQHNQSGLEQLVLVKALNKVKDEQACQEFRRQLDLLRAISHKGVVRLFGLCREKDPHYMVLEYTDWGDLKQFLLATAGKVNTATAGSSSPPPLTTSQVLAVAYQIARGMDAIYRARFTHRDLATRNCVISSEFIVKVSYPALCKDKYSREYHKHRNTLLPIRWLAPECIQEDEYTTKSDIFAYGVVVWELFNQATKLPHEELTNEQVVQRSQAGSLEWSVAESTPDSLREILLSCWVANPKERPSFSQLGAALSKAMQSAEK.

The N-terminal stretch at 1–22 is a signal peptide; sequence MTARMISIYGLVLASMMASVLA. Residues 23–581 lie on the Extracellular side of the membrane; the sequence is SSSRFQRLPQ…GGDGFLVTRA (559 aa). 5 Ig-like C2-type domains span residues 25-114, 113-199, 251-365, 368-463, and 468-558; these read SRFQ…AKLS, LSVI…RVMS, PEDL…VPVS, PGVL…VAIN, and PKFS…VQLI. An N-linked (GlcNAc...) asparagine glycan is attached at Asn-39. 4 disulfide bridges follow: Cys-46-Cys-95, Cys-137-Cys-188, Cys-276-Cys-354, and Cys-399-Cys-447. 7 N-linked (GlcNAc...) asparagine glycosylation sites follow: Asn-336, Asn-417, Asn-429, Asn-444, Asn-457, Asn-512, and Asn-524. Cys-490 and Cys-542 are joined by a disulfide. The helical transmembrane segment at 582–602 threads the bilayer; it reads VLITMTVALAYIVLVVGLMLW. Over 603–1033 the chain is Cytoplasmic; that stretch reads CRYRRQARKA…LSKAMQSAEK (431 aa). Disordered stretches follow at residues 617 to 679 and 718 to 760; these read LSTK…KKSA and SPSD…KTSM. Polar residues predominate over residues 655 to 673; sequence KSSGDAQKSDDTACSQQSR. Residue Ser-678 is modified to Phosphoserine. Positions 692–1028 constitute a Protein kinase; inactive domain; the sequence is LSELIQIGRG…QLGAALSKAM (337 aa). Residues 720–731 are compositionally biased toward basic and acidic residues; that stretch reads SDKDADTEKQHS.

This sequence belongs to the protein kinase superfamily. Tyr protein kinase family. Insulin receptor subfamily. In terms of assembly, interacts with plexA; component of a receptor complex that mediates the repulsive signaling in response to Semaphorin ligands.

The protein resides in the cell membrane. Functionally, acts as a calcium-dependent, homophilic cell adhesion molecule that regulates neural recognition during the development of the nervous system. Component of the repulsive Plexin signaling response to regulate motor axon guidance at the embryonic stage. Also component of a receptor complex that is required in the adult visual system to innervate the lamina layer; specific targeting of R1-R6 axons. This is Tyrosine-protein kinase-like otk from Drosophila yakuba (Fruit fly).